Consider the following 170-residue polypeptide: Shikimate kinase (170 aa).

11-16 contributes to the ATP binding site; sequence LSGKST. Serine 15 is a Mg(2+) binding site. Substrate is bound by residues aspartate 33, arginine 57, and glycine 79. Arginine 119 is a binding site for ATP. Arginine 137 contacts substrate.

The protein belongs to the shikimate kinase family. In terms of assembly, monomer. Mg(2+) is required as a cofactor.

It is found in the cytoplasm. It carries out the reaction shikimate + ATP = 3-phosphoshikimate + ADP + H(+). The protein operates within metabolic intermediate biosynthesis; chorismate biosynthesis; chorismate from D-erythrose 4-phosphate and phosphoenolpyruvate: step 5/7. Its function is as follows. Catalyzes the specific phosphorylation of the 3-hydroxyl group of shikimic acid using ATP as a cosubstrate. This Clostridium botulinum (strain ATCC 19397 / Type A) protein is Shikimate kinase.